A 658-amino-acid chain; its full sequence is Protein translocase subunit SecA 3 (658 aa).

Residues Gln-111, 129-133, and Asp-536 contribute to the ATP site; that span reads GEGKT.

The protein belongs to the SecA family. As to quaternary structure, monomer and homodimer. Part of the essential Sec protein translocation apparatus which comprises SecA, SecYEG and auxiliary proteins SecDF-YajC and YidC.

The protein localises to the cell inner membrane. The protein resides in the cytoplasm. It catalyses the reaction ATP + H2O + cellular proteinSide 1 = ADP + phosphate + cellular proteinSide 2.. Functionally, part of the Sec protein translocase complex. Interacts with the SecYEG preprotein conducting channel. Has a central role in coupling the hydrolysis of ATP to the transfer of proteins into and across the cell membrane, serving both as a receptor for the preprotein-SecB complex and as an ATP-driven molecular motor driving the stepwise translocation of polypeptide chains across the membrane. The protein is Protein translocase subunit SecA 3 of Magnetococcus marinus (strain ATCC BAA-1437 / JCM 17883 / MC-1).